The chain runs to 218 residues: Thiopurine S-methyltransferase (218 aa).

Residues tryptophan 10, leucine 45, glutamate 66, and arginine 123 each contribute to the S-adenosyl-L-methionine site.

Belongs to the class I-like SAM-binding methyltransferase superfamily. TPMT family.

It localises to the cytoplasm. The catalysed reaction is S-adenosyl-L-methionine + a thiopurine = S-adenosyl-L-homocysteine + a thiopurine S-methylether.. In terms of biological role, involved in the biological cycling of tellurium and selenium. Tellurium resistance (Ter) mechanism. In Pseudomonas syringae pv. pisi, this protein is Thiopurine S-methyltransferase.